The sequence spans 603 residues: Elongation factor 4 (603 aa).

In terms of domain architecture, tr-type G spans 7–189 (SHIRNFSIIA…SIVHLVPPPR (183 aa)). GTP is bound by residues 19-24 (DHGKST) and 136-139 (NKID).

Belongs to the TRAFAC class translation factor GTPase superfamily. Classic translation factor GTPase family. LepA subfamily.

The protein resides in the cell inner membrane. It catalyses the reaction GTP + H2O = GDP + phosphate + H(+). Functionally, required for accurate and efficient protein synthesis under certain stress conditions. May act as a fidelity factor of the translation reaction, by catalyzing a one-codon backward translocation of tRNAs on improperly translocated ribosomes. Back-translocation proceeds from a post-translocation (POST) complex to a pre-translocation (PRE) complex, thus giving elongation factor G a second chance to translocate the tRNAs correctly. Binds to ribosomes in a GTP-dependent manner. This Thermosynechococcus vestitus (strain NIES-2133 / IAM M-273 / BP-1) protein is Elongation factor 4.